We begin with the raw amino-acid sequence, 291 residues long: Small ribosomal subunit protein uS2 (291 aa).

Residues 235 to 291 (NLQEDEESGDSGVDPYQDREEEITDYSNYTPKDEASGDDEDEEDNSLVNDEDLYDDK) are disordered. A compositionally biased stretch (acidic residues) spans 270–291 (SGDDEDEEDNSLVNDEDLYDDK).

Belongs to the universal ribosomal protein uS2 family.

The sequence is that of Small ribosomal subunit protein uS2 from Treponema denticola (strain ATCC 35405 / DSM 14222 / CIP 103919 / JCM 8153 / KCTC 15104).